A 454-amino-acid chain; its full sequence is Signal recognition particle protein (454 aa).

GTP-binding positions include 102–109 (GLQGTGKT), 184–188 (DTAGR), and 242–245 (TKMD).

It belongs to the GTP-binding SRP family. SRP54 subfamily. In terms of assembly, part of the signal recognition particle protein translocation system, which is composed of SRP and FtsY.

It localises to the cytoplasm. It carries out the reaction GTP + H2O = GDP + phosphate + H(+). Involved in targeting and insertion of nascent membrane proteins into the cytoplasmic membrane. Binds to the hydrophobic signal sequence of the ribosome-nascent chain (RNC) as it emerges from the ribosomes. The SRP-RNC complex is then targeted to the cytoplasmic membrane where it interacts with the SRP receptor FtsY. In Aquifex aeolicus (strain VF5), this protein is Signal recognition particle protein.